The chain runs to 195 residues: Large ribosomal subunit protein eL15 (195 aa).

The interval glycine 174 to arginine 195 is disordered.

This sequence belongs to the eukaryotic ribosomal protein eL15 family.

The polypeptide is Large ribosomal subunit protein eL15 (Picrophilus torridus (strain ATCC 700027 / DSM 9790 / JCM 10055 / NBRC 100828 / KAW 2/3)).